A 319-amino-acid chain; its full sequence is Non-homologous end joining protein Ku (319 aa).

Positions 10–188 constitute a Ku domain; sequence ISFGLVTVPI…PQGIELSEDE (179 aa). Residues 252-319 form a disordered region; sequence QSVAKAKASR…TTPKKPRRSA (68 aa). The segment covering 260–274 has biased composition (basic and acidic residues); it reads SRGESGEADVHELPR. The span at 305-319 shows a compositional bias: basic residues; that stretch reads TAAKKTTPKKPRRSA.

Belongs to the prokaryotic Ku family. In terms of assembly, homodimer. Interacts with LigD.

With LigD forms a non-homologous end joining (NHEJ) DNA repair enzyme, which repairs dsDNA breaks with reduced fidelity. Binds linear dsDNA with 5'- and 3'- overhangs but not closed circular dsDNA nor ssDNA. Recruits and stimulates the ligase activity of LigD. In Streptomyces avermitilis (strain ATCC 31267 / DSM 46492 / JCM 5070 / NBRC 14893 / NCIMB 12804 / NRRL 8165 / MA-4680), this protein is Non-homologous end joining protein Ku.